Consider the following 578-residue polypeptide: Putative fatty-acid--CoA ligase fadD21 (578 aa).

It belongs to the ATP-dependent AMP-binding enzyme family.

The sequence is that of Putative fatty-acid--CoA ligase fadD21 (fadD21) from Mycobacterium bovis (strain ATCC BAA-935 / AF2122/97).